We begin with the raw amino-acid sequence, 346 residues long: Heterogeneous nuclear ribonucleoprotein A2 homolog 1 (346 aa).

RRM domains are found at residues 9–92 and 100–179; these read RKLF…ESAK and KKLF…LSKQ. Disordered regions lie at residues 182 to 217 and 326 to 346; these read QDVQ…FRGG and NYGP…RNRY. The segment covering 193-217 has biased composition (gly residues); the sequence is GNFGFGDSRGGGNFGSGPGGNFRGG. The tract at residues 297-340 is nuclear targeting sequence; that stretch reads QQSSNYGPMKSGGNFGGNRSMGGGPYGGGNYGPGNASGGNGGGY.

It localises to the nucleus. In terms of biological role, forms complexes (ribonucleosomes) with at least 20 other different hnRNP and heterogeneous nuclear RNA in the nucleus. The protein is Heterogeneous nuclear ribonucleoprotein A2 homolog 1 of Xenopus laevis (African clawed frog).